A 555-amino-acid polypeptide reads, in one-letter code: HERV-H_2q24.1 provirus ancestral Env polyprotein (555 aa).

Residues 1–35 form the signal peptide; it reads MILAGRAPSNTSTLMKFYSLLLYSLLFSFPFLYHP. Residues 36–515 are Extracellular-facing; the sequence is LPLPSYLHHT…WALSNWMSWV (480 aa). N-linked (GlcNAc...) asparagine glycosylation is present at asparagine 47. Positions 64 to 67 match the CXXC motif; sequence CWLC. Residues asparagine 222, asparagine 265, asparagine 283, asparagine 352, and asparagine 370 are each glycosylated (N-linked (GlcNAc...) asparagine). The interval 388 to 408 is fusion peptide; it reads VIPLIPLMVGLGLSASTIALS. Asparagine 475 carries an N-linked (GlcNAc...) asparagine glycan. Residues 516-536 form a helical membrane-spanning segment; that stretch reads LPILSPLIPIFLLLLFGPCIF. The Cytoplasmic portion of the chain corresponds to 537–555; that stretch reads HLVSQFIQNRIQAITNHSI.

Belongs to the gamma type-C retroviral envelope protein family. HERV class-I H env subfamily. As to quaternary structure, the surface (SU) and transmembrane (TM) proteins form a heterodimer. SU and TM are attached by noncovalent interactions or by a labile interchain disulfide bond. Post-translationally, specific enzymatic cleavages in vivo yield the mature SU and TM proteins. As to expression, low expression in testis.

Its subcellular location is the virion. It is found in the cell membrane. Its function is as follows. Retroviral envelope proteins mediate receptor recognition and membrane fusion during early infection. Endogenous envelope proteins may have kept, lost or modified their original function during evolution. This endogenous envelope protein has lost its original fusogenic properties. Functionally, SU mediates receptor recognition. TM anchors the envelope heterodimer to the viral membrane through one transmembrane domain. The other hydrophobic domain, called fusion peptide, mediates fusion of the viral membrane with the target cell membrane. The chain is HERV-H_2q24.1 provirus ancestral Env polyprotein from Homo sapiens (Human).